A 524-amino-acid polypeptide reads, in one-letter code: Peptide chain release factor 3 (524 aa).

The tr-type G domain occupies 11-278 (AKRRTFAIIS…SFVQYAPEPG (268 aa)). Residues 20-27 (SHPDAGKT), 88-92 (DTPGH), and 142-145 (NKLD) contribute to the GTP site.

It belongs to the TRAFAC class translation factor GTPase superfamily. Classic translation factor GTPase family. PrfC subfamily.

The protein localises to the cytoplasm. Functionally, increases the formation of ribosomal termination complexes and stimulates activities of RF-1 and RF-2. It binds guanine nucleotides and has strong preference for UGA stop codons. It may interact directly with the ribosome. The stimulation of RF-1 and RF-2 is significantly reduced by GTP and GDP, but not by GMP. This Lacticaseibacillus casei (strain BL23) (Lactobacillus casei) protein is Peptide chain release factor 3.